The sequence spans 318 residues: D-alanine--D-alanine ligase (318 aa).

The 207-residue stretch at 101 to 307 (KKIIQYEGLP…FPDLIEKLVE (207 aa)) folds into the ATP-grasp domain. 135 to 190 (CREMGLPLVVKAPTQGSTIGMSFVHKEEDMAGALELAYDYDPVALVEQFIRGTEVT) is an ATP binding site. Aspartate 261, glutamate 274, and asparagine 276 together coordinate Mg(2+).

It belongs to the D-alanine--D-alanine ligase family. The cofactor is Mg(2+). It depends on Mn(2+) as a cofactor.

It localises to the cytoplasm. It catalyses the reaction 2 D-alanine + ATP = D-alanyl-D-alanine + ADP + phosphate + H(+). The protein operates within cell wall biogenesis; peptidoglycan biosynthesis. Functionally, cell wall formation. In Pelotomaculum thermopropionicum (strain DSM 13744 / JCM 10971 / SI), this protein is D-alanine--D-alanine ligase.